The chain runs to 163 residues: uncharacterized protein (163 aa).

A helical membrane pass occupies residues 7-23 (TLVAFIATFFNLAATSI).

It localises to the membrane. This is an uncharacterized protein from Saccharomyces cerevisiae (strain ATCC 204508 / S288c) (Baker's yeast).